A 387-amino-acid chain; its full sequence is Protoheme IX farnesyltransferase, mitochondrial (387 aa).

8 helical membrane passes run 95–115 (LTVL…YPGL), 117–137 (FNTL…ANAF), 183–203 (FLVN…YMGI), 212–232 (IVNT…GWAA), 242–262 (PGGL…FNAF), 284–306 (ALNA…AYIS), 311–330 (GPWY…ARAW), and 345–365 (FFAS…CHMI).

The protein belongs to the UbiA prenyltransferase family.

The protein localises to the mitochondrion membrane. It carries out the reaction heme b + (2E,6E)-farnesyl diphosphate + H2O = Fe(II)-heme o + diphosphate. In terms of biological role, converts protoheme IX and farnesyl diphosphate to heme O. The chain is Protoheme IX farnesyltransferase, mitochondrial (cox10) from Schizosaccharomyces pombe (strain 972 / ATCC 24843) (Fission yeast).